Consider the following 322-residue polypeptide: NADH-quinone oxidoreductase subunit H (322 aa).

8 helical membrane-spanning segments follow: residues 12 to 32, 79 to 99, 111 to 131, 151 to 171, 183 to 203, 234 to 254, 262 to 282, and 301 to 321; these read IGKA…MSFI, IFVL…AVVP, VGLL…LFAG, LSYE…TGSF, LWNV…GVAV, FFVG…TLFF, LPPF…FILL, and VCLP…LMNA.

Belongs to the complex I subunit 1 family. NDH-1 is composed of 14 different subunits. Subunits NuoA, H, J, K, L, M, N constitute the membrane sector of the complex.

The protein resides in the cell inner membrane. The catalysed reaction is a quinone + NADH + 5 H(+)(in) = a quinol + NAD(+) + 4 H(+)(out). In terms of biological role, NDH-1 shuttles electrons from NADH, via FMN and iron-sulfur (Fe-S) centers, to quinones in the respiratory chain. The immediate electron acceptor for the enzyme in this species is believed to be ubiquinone. Couples the redox reaction to proton translocation (for every two electrons transferred, four hydrogen ions are translocated across the cytoplasmic membrane), and thus conserves the redox energy in a proton gradient. This subunit may bind ubiquinone. In Aeromonas hydrophila subsp. hydrophila (strain ATCC 7966 / DSM 30187 / BCRC 13018 / CCUG 14551 / JCM 1027 / KCTC 2358 / NCIMB 9240 / NCTC 8049), this protein is NADH-quinone oxidoreductase subunit H.